The sequence spans 293 residues: Acetylglutamate kinase (293 aa).

Substrate contacts are provided by residues 65–66, Arg-87, and Asn-180; that span reads GG.

This sequence belongs to the acetylglutamate kinase family. ArgB subfamily.

Its subcellular location is the cytoplasm. The catalysed reaction is N-acetyl-L-glutamate + ATP = N-acetyl-L-glutamyl 5-phosphate + ADP. It participates in amino-acid biosynthesis; L-arginine biosynthesis; N(2)-acetyl-L-ornithine from L-glutamate: step 2/4. Catalyzes the ATP-dependent phosphorylation of N-acetyl-L-glutamate. This is Acetylglutamate kinase from Cereibacter sphaeroides (strain ATCC 17029 / ATH 2.4.9) (Rhodobacter sphaeroides).